The chain runs to 550 residues: Hydroxylamine reductase (550 aa).

The [2Fe-2S] cluster site is built by C3, C6, C18, and C25. Residues H249, E273, C317, C405, C433, C458, E492, and K494 each coordinate hybrid [4Fe-2O-2S] cluster. The residue at position 405 (C405) is a Cysteine persulfide.

Belongs to the HCP family. It depends on [2Fe-2S] cluster as a cofactor. Hybrid [4Fe-2O-2S] cluster is required as a cofactor.

The protein resides in the cytoplasm. It carries out the reaction A + NH4(+) + H2O = hydroxylamine + AH2 + H(+). Its function is as follows. Catalyzes the reduction of hydroxylamine to form NH(3) and H(2)O. This chain is Hydroxylamine reductase, found in Enterobacter sp. (strain 638).